The chain runs to 146 residues: Large ribosomal subunit protein uL15 (146 aa).

A compositionally biased stretch (basic and acidic residues) spans 1-13; that stretch reads MKLHELHSAEGSR. The disordered stretch occupies residues 1–55; it reads MKLHELHSAEGSRRNRKRVGRGTSSGYGKTSGRGQKGQLARQGGHTRLGFEGGQM. Over residues 23 to 35 the composition is skewed to gly residues; sequence TSSGYGKTSGRGQ.

Belongs to the universal ribosomal protein uL15 family. In terms of assembly, part of the 50S ribosomal subunit.

Functionally, binds to the 23S rRNA. This chain is Large ribosomal subunit protein uL15, found in Lactobacillus helveticus (strain DPC 4571).